A 537-amino-acid chain; its full sequence is Actin-histidine N-methyltransferase (537 aa).

Positions 1–12 are enriched in basic residues; the sequence is MGKNTKRNKKTK. Residues 1 to 50 form a disordered region; the sequence is MGKNTKRNKKTKQQQQQPQQNGVTASASGTAVEDFEDQQAASSLPSLNGK. S-adenosyl-L-methionine is bound by residues arginine 114, 143–145, arginine 299, 325–329, and 375–377; these read YQL, DMANH, and NGF. In terms of domain architecture, SET spans 133–364; that stretch reads EGLEIAIFPG…TGEQFFIYYG (232 aa).

It belongs to the class V-like SAM-binding methyltransferase superfamily. SETD3 actin-histidine methyltransferase family.

Its subcellular location is the cytoplasm. It localises to the nucleus. The enzyme catalyses L-histidyl-[protein] + S-adenosyl-L-methionine = N(tele)-methyl-L-histidyl-[protein] + S-adenosyl-L-homocysteine + H(+). Functionally, protein-histidine N-methyltransferase that specifically mediates 3-methylhistidine (tele-methylhistidine) methylation of actin at 'His-74'. This Drosophila melanogaster (Fruit fly) protein is Actin-histidine N-methyltransferase.